Reading from the N-terminus, the 209-residue chain is Ribosomal RNA large subunit methyltransferase E (209 aa).

S-adenosyl-L-methionine contacts are provided by glycine 63, tryptophan 65, aspartate 83, aspartate 99, and aspartate 124. The active-site Proton acceptor is the lysine 164.

Belongs to the class I-like SAM-binding methyltransferase superfamily. RNA methyltransferase RlmE family.

Its subcellular location is the cytoplasm. It carries out the reaction uridine(2552) in 23S rRNA + S-adenosyl-L-methionine = 2'-O-methyluridine(2552) in 23S rRNA + S-adenosyl-L-homocysteine + H(+). Functionally, specifically methylates the uridine in position 2552 of 23S rRNA at the 2'-O position of the ribose in the fully assembled 50S ribosomal subunit. The protein is Ribosomal RNA large subunit methyltransferase E of Baumannia cicadellinicola subsp. Homalodisca coagulata.